Here is a 117-residue protein sequence, read N- to C-terminus: Large ribosomal subunit protein bL19 (117 aa).

This sequence belongs to the bacterial ribosomal protein bL19 family.

This protein is located at the 30S-50S ribosomal subunit interface and may play a role in the structure and function of the aminoacyl-tRNA binding site. This chain is Large ribosomal subunit protein bL19, found in Shewanella piezotolerans (strain WP3 / JCM 13877).